The sequence spans 535 residues: Light-independent protochlorophyllide reductase subunit B (535 aa).

Residue Asp36 coordinates [4Fe-4S] cluster. The active-site Proton donor is Asp292. A substrate-binding site is contributed by 428 to 429 (GL).

This sequence belongs to the ChlB/BchB/BchZ family. As to quaternary structure, protochlorophyllide reductase is composed of three subunits; BchL, BchN and BchB. Forms a heterotetramer of two BchB and two BchN subunits. It depends on [4Fe-4S] cluster as a cofactor.

It carries out the reaction chlorophyllide a + oxidized 2[4Fe-4S]-[ferredoxin] + 2 ADP + 2 phosphate = protochlorophyllide a + reduced 2[4Fe-4S]-[ferredoxin] + 2 ATP + 2 H2O. Its pathway is porphyrin-containing compound metabolism; bacteriochlorophyll biosynthesis (light-independent). Component of the dark-operative protochlorophyllide reductase (DPOR) that uses Mg-ATP and reduced ferredoxin to reduce ring D of protochlorophyllide (Pchlide) to form chlorophyllide a (Chlide). This reaction is light-independent. The NB-protein (BchN-BchB) is the catalytic component of the complex. This Chlorobaculum parvum (strain DSM 263 / NCIMB 8327) (Chlorobium vibrioforme subsp. thiosulfatophilum) protein is Light-independent protochlorophyllide reductase subunit B.